A 753-amino-acid polypeptide reads, in one-letter code: 5-methyltetrahydropteroyltriglutamate--homocysteine methyltransferase (753 aa).

Residues 17–20 (RELK) and Lys-117 contribute to the 5-methyltetrahydropteroyltri-L-glutamate site. L-homocysteine is bound by residues 431–433 (IGS) and Glu-484. L-methionine is bound by residues 431 to 433 (IGS) and Glu-484. 5-methyltetrahydropteroyltri-L-glutamate-binding positions include 515 to 516 (RC) and Trp-561. Asp-599 is a binding site for L-homocysteine. Position 599 (Asp-599) interacts with L-methionine. 5-methyltetrahydropteroyltri-L-glutamate is bound at residue Glu-605. The Zn(2+) site is built by His-641, Cys-643, and Glu-665. His-694 serves as the catalytic Proton donor. Residue Cys-726 coordinates Zn(2+).

The protein belongs to the vitamin-B12 independent methionine synthase family. Zn(2+) is required as a cofactor.

The catalysed reaction is 5-methyltetrahydropteroyltri-L-glutamate + L-homocysteine = tetrahydropteroyltri-L-glutamate + L-methionine. It functions in the pathway amino-acid biosynthesis; L-methionine biosynthesis via de novo pathway; L-methionine from L-homocysteine (MetE route): step 1/1. Functionally, catalyzes the transfer of a methyl group from 5-methyltetrahydrofolate to homocysteine resulting in methionine formation. This chain is 5-methyltetrahydropteroyltriglutamate--homocysteine methyltransferase, found in Shigella dysenteriae serotype 1 (strain Sd197).